A 138-amino-acid polypeptide reads, in one-letter code: Small ribosomal subunit protein uS11c (138 aa).

Positions 1-24 are disordered; it reads MAKPIPKVGSRRNGRSSARKSARR. Residues 9–24 show a composition bias toward basic residues; that stretch reads GSRRNGRSSARKSARR.

The protein belongs to the universal ribosomal protein uS11 family. In terms of assembly, part of the 30S ribosomal subunit.

It is found in the plastid. It localises to the chloroplast. The protein is Small ribosomal subunit protein uS11c of Gossypium hirsutum (Upland cotton).